Consider the following 298-residue polypeptide: Glutamyl-Q tRNA(Asp) synthetase (298 aa).

L-glutamate contacts are provided by residues 9–13 (RFAPS) and Glu-45. A 'HIGH' region motif is present at residues 12–22 (PSPSGELHFGS). Cys-101, Cys-103, Tyr-115, and Cys-119 together coordinate Zn(2+). L-glutamate contacts are provided by Tyr-172 and Arg-190. Positions 228 to 232 (KLSKQ) match the 'KMSKS' region motif. Lys-231 contributes to the ATP binding site.

Belongs to the class-I aminoacyl-tRNA synthetase family. GluQ subfamily. The cofactor is Zn(2+).

Functionally, catalyzes the tRNA-independent activation of glutamate in presence of ATP and the subsequent transfer of glutamate onto a tRNA(Asp). Glutamate is transferred on the 2-amino-5-(4,5-dihydroxy-2-cyclopenten-1-yl) moiety of the queuosine in the wobble position of the QUC anticodon. In Cronobacter sakazakii (strain ATCC BAA-894) (Enterobacter sakazakii), this protein is Glutamyl-Q tRNA(Asp) synthetase.